The following is a 223-amino-acid chain: Probable GTP-binding protein EngB (223 aa).

The 175-residue stretch at 49-223 (MGVEIAFAGR…LRAALAGLTD (175 aa)) folds into the EngB-type G domain. GTP contacts are provided by residues 57-64 (GRSNVGKS), 84-88 (GRTKQ), 102-105 (DMPG), 169-172 (TKAD), and 203-205 (TSS). Mg(2+)-binding residues include Ser-64 and Thr-86.

This sequence belongs to the TRAFAC class TrmE-Era-EngA-EngB-Septin-like GTPase superfamily. EngB GTPase family. Mg(2+) is required as a cofactor.

Functionally, necessary for normal cell division and for the maintenance of normal septation. This is Probable GTP-binding protein EngB from Granulibacter bethesdensis (strain ATCC BAA-1260 / CGDNIH1).